Here is a 255-residue protein sequence, read N- to C-terminus: UPF0246 protein Caul_4480 (255 aa).

Belongs to the UPF0246 family.

This chain is UPF0246 protein Caul_4480, found in Caulobacter sp. (strain K31).